Consider the following 328-residue polypeptide: D-cysteine desulfhydrase (328 aa).

N6-(pyridoxal phosphate)lysine is present on lysine 51.

The protein belongs to the ACC deaminase/D-cysteine desulfhydrase family. As to quaternary structure, homodimer. Requires pyridoxal 5'-phosphate as cofactor.

It catalyses the reaction D-cysteine + H2O = hydrogen sulfide + pyruvate + NH4(+) + H(+). Its function is as follows. Catalyzes the alpha,beta-elimination reaction of D-cysteine and of several D-cysteine derivatives. It could be a defense mechanism against D-cysteine. In Shigella boydii serotype 18 (strain CDC 3083-94 / BS512), this protein is D-cysteine desulfhydrase.